A 283-amino-acid polypeptide reads, in one-letter code: Elongation factor Ts (283 aa).

The segment at threonine 80–valine 83 is involved in Mg(2+) ion dislocation from EF-Tu.

Belongs to the EF-Ts family.

Its subcellular location is the cytoplasm. Associates with the EF-Tu.GDP complex and induces the exchange of GDP to GTP. It remains bound to the aminoacyl-tRNA.EF-Tu.GTP complex up to the GTP hydrolysis stage on the ribosome. In Actinobacillus pleuropneumoniae serotype 3 (strain JL03), this protein is Elongation factor Ts.